The sequence spans 1285 residues: Protein crumbs homolog 2 (1285 aa).

The first 28 residues, 1–28 (MALARPGTPDPQALASVLLLLLWAPALS), serve as a signal peptide directing secretion. The tract at residues 1-350 (MALARPGTPD…GFQCHCPDGY (350 aa)) is required for maximum inhibition of APP amyloid-beta peptide secretion. In terms of domain architecture, EGF-like 1 spans 67-106 (EPRGCATQPCHHGALCVPQGPDPTGFRCYCVPGFQGPRCE). 27 disulfide bridges follow: Cys71–Cys82, Cys76–Cys94, Cys96–Cys105, Cys112–Cys123, Cys117–Cys132, Cys134–Cys143, Cys150–Cys161, Cys155–Cys170, Cys172–Cys181, Cys188–Cys199, Cys193–Cys208, Cys210–Cys220, Cys227–Cys238, Cys232–Cys247, Cys249–Cys258, Cys265–Cys276, Cys270–Cys306, Cys308–Cys317, Cys324–Cys335, Cys329–Cys344, Cys346–Cys355, Cys362–Cys373, Cys367–Cys382, Cys384–Cys393, Cys400–Cys411, Cys405–Cys424, and Cys426–Cys435. Residues 108 to 144 (DIDECASRPCHHGATCRNLADRYECHCPLGYAGVTCE) enclose the EGF-like 2; calcium-binding domain. Residues 146-182 (EVDECASAPCLHGGSCLDGVGSFRCVCAPGYGGTRCQ) enclose the EGF-like 3; calcium-binding domain. The 38-residue stretch at 184-221 (DLDECQSQPCAHGGTCHDLVNGFRCDCAGTGYEGTHCE) folds into the EGF-like 4; calcium-binding domain. EGF-like domains are found at residues 223–259 (EVLE…ELCE) and 261–318 (DEDE…ADCG). Residue Asn235 is glycosylated (N-linked (GlcNAc...) asparagine). The O-linked (Glc...) serine glycan is linked to Ser267. The 37-residue stretch at 320–356 (EVDECASRPCLNGGHCQDLPNGFQCHCPDGYAGPTCE) folds into the EGF-like 7; calcium-binding domain. Residues 358 to 394 (DVDECLSDPCLHGGTCSDTVAGYICRCPETWGGRDCS) enclose the EGF-like 8; calcium-binding domain. Residues 396 to 436 (QLTGCQGHTCPLAATCIPIFESGVHSYVCHCPPGTHGPFCG) enclose the EGF-like 9 domain. Residues 431-603 (HGPFCGQNTT…DLGENVLLGC (173 aa)) enclose the Laminin G-like 1 domain. N-linked (GlcNAc...) asparagine glycans are attached at residues Asn438 and Asn478. 4 disulfide bridges follow: Cys579–Cys603, Cys609–Cys620, Cys614–Cys629, and Cys631–Cys640. The EGF-like 10 domain occupies 605-641 (RREQCRPLPCVHGGSCVDLWTHFRCDCARPHRGPTCA). The 159-residue stretch at 647–805 (ATFGLGGAPS…RQSWNLTAGC (159 aa)) folds into the Laminin G-like 2 domain. Residues Asn669, Asn690, Asn786, and Asn800 are each glycosylated (N-linked (GlcNAc...) asparagine). 4 disulfides stabilise this stretch: Cys766–Cys805, Cys811–Cys822, Cys816–Cys831, and Cys833–Cys842. The region spanning 807–843 (SEDMCSPDPCFNGGTCLVTWNDFHCTCPANFTGPTCA) is the EGF-like 11 domain. Asn836, Asn886, Asn926, and Asn1009 each carry an N-linked (GlcNAc...) asparagine glycan. The region spanning 871 to 1054 (EATFREGPPA…PGTPAPILGC (184 aa)) is the Laminin G-like 3 domain. Intrachain disulfides connect Cys1013-Cys1054, Cys1060-Cys1071, Cys1065-Cys1080, Cys1082-Cys1091, Cys1098-Cys1108, Cys1103-Cys1118, Cys1120-Cys1129, Cys1138-Cys1150, Cys1144-Cys1159, Cys1161-Cys1170, Cys1177-Cys1188, Cys1182-Cys1197, and Cys1199-Cys1208. EGF-like domains lie at 1056-1092 (GAPV…PRCE), 1094-1130 (HVDP…PRCR), 1134-1171 (PSKE…QRCQ), and 1173-1209 (PTLP…QFCE). Residues Asn1141 and Asn1158 are each glycosylated (N-linked (GlcNAc...) asparagine). A helical membrane pass occupies residues 1225–1245 (VAVPAACACLLLLLLGLLSGI). Positions 1249–1285 (RKRRQSEGTYSPSQQEVAGARLEMDSVLKVPPEERLI) are interaction with EPB41L5.

The protein belongs to the Crumbs protein family. Associates with the gamma-secretase complex via interaction (via the transmembrane domain) with PSEN1/PS1. Interacts (via intracellular domain) with EPB41L5. Interacts with PALS1. Post-translationally, O-glucosylated by POGLUT1 at Ser-267; consists of an O-glucose trisaccharide, in which the O-glucose is elongated by the addition of two xylose residues. O-glucosylation is required for localization at the plasma membrane. N-glycosylated. In terms of tissue distribution, expressed in glomeruli, podocytes of the glomerular capillary loops, and parietal glomerular epithelial cells in the kidney (at protein level). Expressed in retina, fetal eye and brain. Also expressed in kidney, RPE/choroid, and at low levels in lung, placenta, and heart.

The protein resides in the apical cell membrane. Its subcellular location is the cytoplasm. It localises to the cell junction. It is found in the secreted. Apical polarity protein that plays a central role during the epithelial-to-mesenchymal transition (EMT) at gastrulation, when newly specified mesodermal cells move inside the embryo. Acts by promoting cell ingression, the process by which cells leave the epithelial epiblast and move inside the embryo to form a new tissue layer. The anisotropic distribution of CRB2 and MYH10/myosin-IIB at cell edges define which cells will ingress: cells with high apical CRB2 are probably extruded from the epiblast by neighboring cells with high levels of apical MYH10/myosin-IIB. Plays a role in the maintenance of retinal neuroepithelium organization, structural integrity, adhesion, photoreceptor polarity and retinal photoreceptor layer thickness. May play a role in determining the length of cone photoreceptor outer segments and proliferation of late-born progenitor cells. Also required for maintenance of the apical polarity complex during development of the cortex. Inhibits gamma-secretase-dependent cleavage of APP and secretion of amyloid-beta peptide 40 and amyloid-beta peptide 42, and thereby inhibits gamma-secretase-dependent Notch transcription. The sequence is that of Protein crumbs homolog 2 from Homo sapiens (Human).